The sequence spans 178 residues: Actin-related protein 2/3 complex subunit 3-A (178 aa).

Belongs to the ARPC3 family. Component of the Arp2/3 complex composed of actr2/arp2, actr3/arp3, arpc1 (arpc1a or arpc1b), arpc2, arpc3, arpc4 and arpc5.

It localises to the cytoplasm. The protein localises to the cytoskeleton. It is found in the cell projection. Its subcellular location is the nucleus. Functionally, component of the Arp2/3 complex, a multiprotein complex that mediates actin polymerization upon stimulation by nucleation-promoting factor (NPF). The Arp2/3 complex mediates the formation of branched actin networks in the cytoplasm, providing the force for cell motility. In addition to its role in the cytoplasmic cytoskeleton, the Arp2/3 complex also promotes actin polymerization in the nucleus, thereby regulating gene transcription and repair of damaged DNA. The Arp2/3 complex promotes homologous recombination (HR) repair in response to DNA damage by promoting nuclear actin polymerization, leading to drive motility of double-strand breaks (DSBs). This Xenopus laevis (African clawed frog) protein is Actin-related protein 2/3 complex subunit 3-A (arpc3-a).